The following is a 501-amino-acid chain: G protein-activated inward rectifier potassium channel 1 (501 aa).

Residues 1–40 (MSALRRKFGDDYQVVTTSSSGSGLQPQGPGQGPQQQLVPK) form a disordered region. Over 1-80 (MSALRRKFGD…LFTTLVDLKW (80 aa)) the chain is Cytoplasmic. A compositionally biased stretch (low complexity) spans 18–37 (SSSGSGLQPQGPGQGPQQQL). The helical transmembrane segment at 81–105 (RWNLFIFILTYTVAWLFMASMWWVI) threads the bilayer. Residues 106–129 (AYTRGDLNKAHVGNYTPCVANVYN) lie on the Extracellular side of the membrane. Residue Asn-119 is glycosylated (N-linked (GlcNAc...) asparagine). An intramembrane region (helical; Pore-forming) is located at residues 130–141 (FPSAFLFFIETE). Positions 142–148 (ATIGYGY) form an intramembrane region, pore-forming. The short motif at 143-148 (TIGYGY) is the Selectivity filter element. Topologically, residues 149-157 (RYITDKCPE) are extracellular. Residues 158–179 (GIILFLFQSILGSIVDAFLIGC) traverse the membrane as a helical segment. The Cytoplasmic portion of the chain corresponds to 180 to 501 (MFIKMSQPKK…LRKMNSDRFT (322 aa)). The tract at residues 182-209 (IKMSQPKKRAETLMFSEHAVISMRDGKL) is polyphosphoinositide (PIP2)-binding. Ser-385 and Ser-424 each carry phosphoserine.

Belongs to the inward rectifier-type potassium channel (TC 1.A.2.1) family. KCNJ3 subfamily. In terms of assembly, associates with KCNJ5/GIRK4 or KCNJ6/GIRK2 or KCNJ9/GIRK3 to form a G-protein activated heteromultimer pore-forming unit. The resulting inward current is much larger.

Its subcellular location is the membrane. The enzyme catalyses K(+)(in) = K(+)(out). Its activity is regulated as follows. Heteromultimer composed of KCNJ3/GIRK1 and KCNJ5/GIRK4 is activated by phosphatidylinositol 4,5 biphosphate (PtdIns(4,5)P2). Inward rectifier potassium channels are characterized by a greater tendency to allow potassium to flow into the cell rather than out of it. Their voltage dependence is regulated by the concentration of extracellular potassium; as external potassium is raised, the voltage range of the channel opening shifts to more positive voltages. The inward rectification is mainly due to the blockage of outward current by internal magnesium. This potassium channel is controlled by G proteins. This receptor plays a crucial role in regulating the heartbeat. This is G protein-activated inward rectifier potassium channel 1 (KCNJ3) from Bos taurus (Bovine).